We begin with the raw amino-acid sequence, 1312 residues long: DNA repair protein RAD50.L (1312 aa).

R13, N38, G39, G41, K42, T43, T44, V67, D69, and Q159 together coordinate ATP. T43 contributes to the Mg(2+) binding site. Mg(2+) is bound at residue Q159. 3 coiled-coil regions span residues 203-342 (VREY…LNRE), 415-558 (LREF…IKSR), and 587-628 (INQT…FEEK). In terms of domain architecture, Zinc-hook spans 635–734 (SQDFDSDLSR…RKDDMMELKP (100 aa)). Zn(2+) contacts are provided by C681 and C684. Residues 712–1070 (LKSAEGELKR…ENKSESLKTN (359 aa)) adopt a coiled-coil conformation.

Belongs to the SMC family. RAD50 subfamily. In terms of assembly, component of the MRN complex composed of two heterodimers RAD50 and MRE11 associated with a single NBN. The cofactor is Zn(2+).

It is found in the nucleus. It localises to the chromosome. The protein localises to the telomere. The enzyme catalyses ATP + H2O = ADP + phosphate + H(+). Functionally, component of the MRN complex, which plays a central role in double-strand break (DSB) repair, DNA recombination, maintenance of telomere integrity and meiosis. The MRN complex is involved in the repair of DNA double-strand breaks (DSBs) via homologous recombination (HR), an error-free mechanism which primarily occurs during S and G2 phases. The complex (1) mediates the end resection of damaged DNA, which generates proper single-stranded DNA, a key initial steps in HR, and is (2) required for the recruitment of other repair factors and efficient activation of ATM and ATR upon DNA damage. The MRN complex possesses single-strand endonuclease activity and double-strand-specific 3'-5' exonuclease activity, which are provided by mre11, to initiate end resection, which is required for single-strand invasion and recombination. Within the complex, rad50 is both required to bind DNA ends and hold them in close proximity and regulate the activity of MRE11. Rad50 provides an ATP-dependent control of MRE11 by positioning DNA ends into the mre11 active site: ATP-binding induces a large structural change from an open form with accessible MRE11 nuclease sites into a closed form. The MRN complex is also required for DNA damage signaling via activation of the atm and atr kinases: the nuclease activity of mre11 is not required to activate ATM and ATR. The MRN complex promotes recruitment of topbp1 to DNA damage sites. The MRN complex and rbbp8/CtIP are also required for chromosome alignment during metaphase. This chain is DNA repair protein RAD50.L, found in Xenopus laevis (African clawed frog).